We begin with the raw amino-acid sequence, 545 residues long: Glucose-6-phosphate isomerase (545 aa).

Residue Glu351 is the Proton donor of the active site. Residues His382 and Lys510 contribute to the active site.

The protein belongs to the GPI family.

It is found in the cytoplasm. The enzyme catalyses alpha-D-glucose 6-phosphate = beta-D-fructose 6-phosphate. The protein operates within carbohydrate biosynthesis; gluconeogenesis. It participates in carbohydrate degradation; glycolysis; D-glyceraldehyde 3-phosphate and glycerone phosphate from D-glucose: step 2/4. In terms of biological role, catalyzes the reversible isomerization of glucose-6-phosphate to fructose-6-phosphate. The polypeptide is Glucose-6-phosphate isomerase (Shewanella frigidimarina (strain NCIMB 400)).